Consider the following 463-residue polypeptide: tRNA-2-methylthio-N(6)-dimethylallyladenosine synthase (463 aa).

Positions 5-125 constitute an MTTase N-terminal domain; the sequence is RKLHIKSYGC…LPQLLAKAEQ (121 aa). Residues Cys-14, Cys-50, Cys-88, Cys-166, Cys-170, and Cys-173 each contribute to the [4Fe-4S] cluster site. The region spanning 152 to 384 is the Radical SAM core domain; it reads RARGISAFVT…QQLIDQQQSA (233 aa). The region spanning 387 to 449 is the TRAM domain; sequence KAAIGRTVEV…RYSLLGELAS (63 aa).

This sequence belongs to the methylthiotransferase family. MiaB subfamily. In terms of assembly, monomer. It depends on [4Fe-4S] cluster as a cofactor.

It is found in the cytoplasm. It catalyses the reaction N(6)-dimethylallyladenosine(37) in tRNA + (sulfur carrier)-SH + AH2 + 2 S-adenosyl-L-methionine = 2-methylsulfanyl-N(6)-dimethylallyladenosine(37) in tRNA + (sulfur carrier)-H + 5'-deoxyadenosine + L-methionine + A + S-adenosyl-L-homocysteine + 2 H(+). Catalyzes the methylthiolation of N6-(dimethylallyl)adenosine (i(6)A), leading to the formation of 2-methylthio-N6-(dimethylallyl)adenosine (ms(2)i(6)A) at position 37 in tRNAs that read codons beginning with uridine. This is tRNA-2-methylthio-N(6)-dimethylallyladenosine synthase from Rhodopseudomonas palustris (strain TIE-1).